A 125-amino-acid chain; its full sequence is Sulfiredoxin, chloroplastic/mitochondrial (125 aa).

The N-terminal 22 residues, Met1–Ser22, are a transit peptide targeting the chloroplast and mitochondrion.

This sequence belongs to the sulfiredoxin family. Low expression in photosynthetic tissues such as leaves and sepals.

It localises to the plastid. The protein resides in the chloroplast. The protein localises to the mitochondrion. It carries out the reaction S-hydroxy-S-oxy-L-cysteinyl-[peroxiredoxin] + [protein]-dithiol + ATP = S-hydroxy-L-cysteinyl-[peroxiredoxin] + [protein]-disulfide + ADP + phosphate. Contributes to oxidative stress resistance by reducing cysteine-sulfinic acid formed under exposure to oxidants in a peroxiredoxin. May catalyze the reduction in a multi-step process by acting both as a specific phosphotransferase and a thioltransferase. Required to switch on the antioxidant pathway to regenerate the oxidative damage. In mitochondrion, catalyzes the retroreduction of the inactive sulfinic form of atypical Prx IIF using thioredoxin as reducing agent. The protein is Sulfiredoxin, chloroplastic/mitochondrial (SRX) of Arabidopsis thaliana (Mouse-ear cress).